We begin with the raw amino-acid sequence, 331 residues long: Vitamin B12 import system permease protein BtuC (331 aa).

The next 7 membrane-spanning stretches (helical) occupy residues 21–43 (LALL…ERWI), 63–85 (PRTL…MQAV), 90–112 (LAEP…TVLL), 116–138 (LLPV…FLLL), 151–173 (LLIG…YFST), 193–210 (WRHG…LWLS), and 239–261 (VLVL…IAFI).

This sequence belongs to the binding-protein-dependent transport system permease family. FecCD subfamily. As to quaternary structure, the complex is composed of two ATP-binding proteins (BtuD), two transmembrane proteins (BtuC) and a solute-binding protein (BtuF).

It is found in the cell inner membrane. Part of the ABC transporter complex BtuCDF involved in vitamin B12 import. Involved in the translocation of the substrate across the membrane. The protein is Vitamin B12 import system permease protein BtuC of Pectobacterium atrosepticum (strain SCRI 1043 / ATCC BAA-672) (Erwinia carotovora subsp. atroseptica).